A 155-amino-acid chain; its full sequence is Transcriptional repressor NrdR (155 aa).

A zinc finger lies at 3 to 34 (CPFCQHDDTQVLDTRVSEEGDSIRRRRRCTSC). The 91-residue stretch at 49-139 (PVVVKKNGSR…VYKSFEDVAE (91 aa)) folds into the ATP-cone domain.

The protein belongs to the NrdR family. It depends on Zn(2+) as a cofactor.

Negatively regulates transcription of bacterial ribonucleotide reductase nrd genes and operons by binding to NrdR-boxes. The sequence is that of Transcriptional repressor NrdR from Janthinobacterium sp. (strain Marseille) (Minibacterium massiliensis).